The following is a 307-amino-acid chain: MRGQPRPKLRRMTEQQTGTPQLKQGFAEMFKGGVIMDVVTADQARIAEAAGATAVMALERVPADIRKDGGVARMSDPKMIREIMAAVSIPVMAKVRIGHVVEAQILQAIGVDFIDESEVLTPADEQFHILKRDFKVPFVCGAKNLGEALRRVGEGASMIRTKGEAGTGNVVEAVRHARAVLGDIRAVQSRPAEELMTVARDLQAPYDLVQYVHAHGQLPVVNFAAGGVATPADAALMMQLGLDGVFVGSGIFKSANPERRAQAIVRAVTHFQNPDILAEVSEDLGAPMTGINIDELIPEARLASRGW.

Residues 1 to 10 (MRGQPRPKLR) are compositionally biased toward basic residues. The tract at residues 1–20 (MRGQPRPKLRRMTEQQTGTP) is disordered. D37 is a D-ribose 5-phosphate binding site. K94 functions as the Schiff-base intermediate with D-ribose 5-phosphate in the catalytic mechanism. G166 contacts D-ribose 5-phosphate. D-glyceraldehyde 3-phosphate is bound at residue R178. D-ribose 5-phosphate is bound by residues G227 and 248–249 (GS).

Belongs to the PdxS/SNZ family. In the presence of PdxT, forms a dodecamer of heterodimers.

The catalysed reaction is aldehydo-D-ribose 5-phosphate + D-glyceraldehyde 3-phosphate + L-glutamine = pyridoxal 5'-phosphate + L-glutamate + phosphate + 3 H2O + H(+). It functions in the pathway cofactor biosynthesis; pyridoxal 5'-phosphate biosynthesis. Functionally, catalyzes the formation of pyridoxal 5'-phosphate from ribose 5-phosphate (RBP), glyceraldehyde 3-phosphate (G3P) and ammonia. The ammonia is provided by the PdxT subunit. Can also use ribulose 5-phosphate and dihydroxyacetone phosphate as substrates, resulting from enzyme-catalyzed isomerization of RBP and G3P, respectively. The polypeptide is Pyridoxal 5'-phosphate synthase subunit PdxS (Deinococcus radiodurans (strain ATCC 13939 / DSM 20539 / JCM 16871 / CCUG 27074 / LMG 4051 / NBRC 15346 / NCIMB 9279 / VKM B-1422 / R1)).